Reading from the N-terminus, the 433-residue chain is tRNA-2-methylthio-N(6)-dimethylallyladenosine synthase (433 aa).

Residues 3–118 (KRLYIETLGC…IRDVIKQEKA (116 aa)) enclose the MTTase N-terminal domain. [4Fe-4S] cluster-binding residues include cysteine 12, cysteine 49, cysteine 81, cysteine 150, cysteine 154, and cysteine 157. Residues 136–371 (RTSPYKAFIN…LHLQMLDSIS (236 aa)) form the Radical SAM core domain. The 62-residue stretch at 372–433 (EQEKDKVYEV…RLSLEGELVG (62 aa)) folds into the TRAM domain.

It belongs to the methylthiotransferase family. MiaB subfamily. As to quaternary structure, monomer. Requires [4Fe-4S] cluster as cofactor.

The protein localises to the cytoplasm. The enzyme catalyses N(6)-dimethylallyladenosine(37) in tRNA + (sulfur carrier)-SH + AH2 + 2 S-adenosyl-L-methionine = 2-methylsulfanyl-N(6)-dimethylallyladenosine(37) in tRNA + (sulfur carrier)-H + 5'-deoxyadenosine + L-methionine + A + S-adenosyl-L-homocysteine + 2 H(+). Functionally, catalyzes the methylthiolation of N6-(dimethylallyl)adenosine (i(6)A), leading to the formation of 2-methylthio-N6-(dimethylallyl)adenosine (ms(2)i(6)A) at position 37 in tRNAs that read codons beginning with uridine. This is tRNA-2-methylthio-N(6)-dimethylallyladenosine synthase from Nitratiruptor sp. (strain SB155-2).